Reading from the N-terminus, the 240-residue chain is Diglucosylglycerate octanoyltransferase (240 aa).

Belongs to the OctT acyltransferase family. Homotetramer.

The enzyme catalyses (2R)-2-O-[alpha-D-glucopyranosyl-(1-&gt;6)-alpha-D-glucopyranosyl]-glycerate + octanoyl-CoA = (2R)-2-O-[6-O-octanoyl-alpha-D-glucopyranosyl-(1-&gt;6)-alpha-D-glucopyranosyl]-glycerate + CoA. Its function is as follows. Sugar octanoyltransferase likely involved in the biosynthesis of mycobacterial methylglucose lipopolysaccharide (MGLP). Catalyzes the transfer of an octanoyl group from octanoyl-CoA to the C6 OH of the second glucose in diglucosylglycerate (DGG). Can also use hexanoyl-CoA as acyl donor in vitro. DGG is the preferred acceptor, but to a lesser extent, GG (glucosylglycerate) can be used as substrate. DGG and GG are the two earliest intermediates in MGLP biosynthesis. The sequence is that of Diglucosylglycerate octanoyltransferase from Mycolicibacterium hassiacum (strain DSM 44199 / CIP 105218 / JCM 12690 / 3849) (Mycobacterium hassiacum).